Reading from the N-terminus, the 326-residue chain is Protoheme IX farnesyltransferase (326 aa).

8 helical membrane passes run Leu-35–Leu-55, Leu-60–Leu-80, Thr-106–Val-126, Leu-129–Leu-149, Ile-157–Gly-177, Trp-185–Leu-205, Val-238–Met-258, and Trp-289–Ala-309.

The protein belongs to the UbiA prenyltransferase family. Protoheme IX farnesyltransferase subfamily.

The protein resides in the cell inner membrane. It catalyses the reaction heme b + (2E,6E)-farnesyl diphosphate + H2O = Fe(II)-heme o + diphosphate. The protein operates within porphyrin-containing compound metabolism; heme O biosynthesis; heme O from protoheme: step 1/1. Converts heme B (protoheme IX) to heme O by substitution of the vinyl group on carbon 2 of heme B porphyrin ring with a hydroxyethyl farnesyl side group. The sequence is that of Protoheme IX farnesyltransferase from Synechococcus sp. (strain CC9902).